We begin with the raw amino-acid sequence, 123 residues long: UPF0102 protein Maqu_2464 (123 aa).

The protein belongs to the UPF0102 family.

In Marinobacter nauticus (strain ATCC 700491 / DSM 11845 / VT8) (Marinobacter aquaeolei), this protein is UPF0102 protein Maqu_2464.